Reading from the N-terminus, the 208-residue chain is Thymidylate kinase (208 aa).

10 to 17 is an ATP binding site; sequence GIDGCGKT.

It belongs to the thymidylate kinase family.

The enzyme catalyses dTMP + ATP = dTDP + ADP. Functionally, phosphorylation of dTMP to form dTDP in both de novo and salvage pathways of dTTP synthesis. The chain is Thymidylate kinase from Caldanaerobacter subterraneus subsp. tengcongensis (strain DSM 15242 / JCM 11007 / NBRC 100824 / MB4) (Thermoanaerobacter tengcongensis).